The chain runs to 618 residues: 1-deoxy-D-xylulose-5-phosphate synthase (618 aa).

Thiamine diphosphate contacts are provided by residues His70 and 111 to 113 (GHS). Asp142 is a Mg(2+) binding site. Thiamine diphosphate is bound by residues 143–144 (GS), Asn171, Tyr278, and Glu360. Asn171 provides a ligand contact to Mg(2+).

Belongs to the transketolase family. DXPS subfamily. In terms of assembly, homodimer. The cofactor is Mg(2+). Requires thiamine diphosphate as cofactor.

It catalyses the reaction D-glyceraldehyde 3-phosphate + pyruvate + H(+) = 1-deoxy-D-xylulose 5-phosphate + CO2. The protein operates within metabolic intermediate biosynthesis; 1-deoxy-D-xylulose 5-phosphate biosynthesis; 1-deoxy-D-xylulose 5-phosphate from D-glyceraldehyde 3-phosphate and pyruvate: step 1/1. Catalyzes the acyloin condensation reaction between C atoms 2 and 3 of pyruvate and glyceraldehyde 3-phosphate to yield 1-deoxy-D-xylulose-5-phosphate (DXP). The chain is 1-deoxy-D-xylulose-5-phosphate synthase from Helicobacter pylori (strain J99 / ATCC 700824) (Campylobacter pylori J99).